The chain runs to 631 residues: Phosphomethylpyrimidine synthase (631 aa).

Residues Asn239, Met268, Tyr297, His333, 353 to 355, 394 to 397, and Glu433 each bind substrate; these read SRG and DGLR. His437 is a binding site for Zn(2+). Tyr460 serves as a coordination point for substrate. His501 is a binding site for Zn(2+). [4Fe-4S] cluster contacts are provided by Cys581, Cys584, and Cys589.

It belongs to the ThiC family. As to quaternary structure, homodimer. Requires [4Fe-4S] cluster as cofactor.

It carries out the reaction 5-amino-1-(5-phospho-beta-D-ribosyl)imidazole + S-adenosyl-L-methionine = 4-amino-2-methyl-5-(phosphooxymethyl)pyrimidine + CO + 5'-deoxyadenosine + formate + L-methionine + 3 H(+). It functions in the pathway cofactor biosynthesis; thiamine diphosphate biosynthesis. In terms of biological role, catalyzes the synthesis of the hydroxymethylpyrimidine phosphate (HMP-P) moiety of thiamine from aminoimidazole ribotide (AIR) in a radical S-adenosyl-L-methionine (SAM)-dependent reaction. This is Phosphomethylpyrimidine synthase from Salmonella gallinarum (strain 287/91 / NCTC 13346).